The primary structure comprises 418 residues: UDP-N-acetylglucosamine 1-carboxyvinyltransferase 1 (418 aa).

22–23 (KN) contributes to the phosphoenolpyruvate binding site. Residue Arg-94 coordinates UDP-N-acetyl-alpha-D-glucosamine. Cys-118 (proton donor) is an active-site residue. Cys-118 is subject to 2-(S-cysteinyl)pyruvic acid O-phosphothioketal. UDP-N-acetyl-alpha-D-glucosamine is bound by residues 123-127 (RPIDL), Asp-306, and Ile-328.

Belongs to the EPSP synthase family. MurA subfamily.

Its subcellular location is the cytoplasm. The catalysed reaction is phosphoenolpyruvate + UDP-N-acetyl-alpha-D-glucosamine = UDP-N-acetyl-3-O-(1-carboxyvinyl)-alpha-D-glucosamine + phosphate. The protein operates within cell wall biogenesis; peptidoglycan biosynthesis. Cell wall formation. Adds enolpyruvyl to UDP-N-acetylglucosamine. This chain is UDP-N-acetylglucosamine 1-carboxyvinyltransferase 1, found in Clostridium acetobutylicum (strain ATCC 824 / DSM 792 / JCM 1419 / IAM 19013 / LMG 5710 / NBRC 13948 / NRRL B-527 / VKM B-1787 / 2291 / W).